A 251-amino-acid polypeptide reads, in one-letter code: Small ribosomal subunit protein uS2 (251 aa).

The protein belongs to the universal ribosomal protein uS2 family.

The chain is Small ribosomal subunit protein uS2 from Azoarcus sp. (strain BH72).